We begin with the raw amino-acid sequence, 147 residues long: MINDDLIVLLEPIIKNMGYELWGCEYLSQGKHSLLRIYIDKPDGIGIDDCQEVSKQVSAMLDVEDPIPGHYSLEISSPGIPRPLFSIWQYQRYLGYEIHVKTFKPVNGKRKLSGIIVSASGDTIVLDINNEHQEILLSNIVKANLTV.

The protein belongs to the RimP family.

The protein localises to the cytoplasm. Required for maturation of 30S ribosomal subunits. The sequence is that of Ribosome maturation factor RimP from Legionella pneumophila (strain Lens).